Consider the following 444-residue polypeptide: Homogentisate 1,2-dioxygenase (444 aa).

His298 serves as the catalytic Proton acceptor. Fe cation contacts are provided by His341 and Glu347. Residues Tyr356 and His377 each contribute to the homogentisate site. Position 377 (His377) interacts with Fe cation.

Belongs to the homogentisate dioxygenase family. Hexamer; dimer of trimers. Requires Fe cation as cofactor.

It catalyses the reaction homogentisate + O2 = 4-maleylacetoacetate + H(+). It participates in amino-acid degradation; L-phenylalanine degradation; acetoacetate and fumarate from L-phenylalanine: step 4/6. Involved in the catabolism of homogentisate (2,5-dihydroxyphenylacetate or 2,5-OH-PhAc), a central intermediate in the degradation of phenylalanine and tyrosine. Catalyzes the oxidative ring cleavage of the aromatic ring of homogentisate to yield maleylacetoacetate. The protein is Homogentisate 1,2-dioxygenase of Burkholderia orbicola (strain AU 1054).